The following is a 704-amino-acid chain: Elongation factor G 1 (704 aa).

A tr-type G domain is found at 8–291 (ERYRNIGISA…AVIDYLPSPA (284 aa)). Residues 17 to 24 (AHIDAGKT), 88 to 92 (DTPGH), and 142 to 145 (NKMD) contribute to the GTP site.

It belongs to the TRAFAC class translation factor GTPase superfamily. Classic translation factor GTPase family. EF-G/EF-2 subfamily.

It localises to the cytoplasm. In terms of biological role, catalyzes the GTP-dependent ribosomal translocation step during translation elongation. During this step, the ribosome changes from the pre-translocational (PRE) to the post-translocational (POST) state as the newly formed A-site-bound peptidyl-tRNA and P-site-bound deacylated tRNA move to the P and E sites, respectively. Catalyzes the coordinated movement of the two tRNA molecules, the mRNA and conformational changes in the ribosome. The polypeptide is Elongation factor G 1 (Burkholderia thailandensis (strain ATCC 700388 / DSM 13276 / CCUG 48851 / CIP 106301 / E264)).